The following is a 74-amino-acid chain: MMFRLTSVGCFLLVIVLLNVAVLTNASCRNEGAMCSFGFQCCKKECCMSHCTDFCRNPDKRAHGHGLLRFWGQR.

Residues 1 to 26 (MMFRLTSVGCFLLVIVLLNVAVLTNA) form the signal peptide. 4 cysteine pairs are disulfide-bonded: Cys28-Cys42, Cys35-Cys47, Cys41-Cys51, and Cys46-Cys55. Residues 62–74 (AHGHGLLRFWGQR) constitute a propeptide that is removed on maturation.

It belongs to the conotoxin I2 superfamily. In terms of tissue distribution, expressed by the venom duct.

The protein localises to the secreted. In Conus planorbis (Planorbis cone), this protein is Conotoxin Vt11.7.